The sequence spans 260 residues: Indole-3-glycerol phosphate synthase (260 aa).

Belongs to the TrpC family.

The catalysed reaction is 1-(2-carboxyphenylamino)-1-deoxy-D-ribulose 5-phosphate + H(+) = (1S,2R)-1-C-(indol-3-yl)glycerol 3-phosphate + CO2 + H2O. It participates in amino-acid biosynthesis; L-tryptophan biosynthesis; L-tryptophan from chorismate: step 4/5. The sequence is that of Indole-3-glycerol phosphate synthase from Staphylococcus aureus (strain Mu3 / ATCC 700698).